A 50-amino-acid polypeptide reads, in one-letter code: Cytochrome c oxidase subunit 4 (50 aa).

Topologically, residues 2 to 17 (ASHHEITDHKHGEMDI) are cytoplasmic. Residues 18–49 (RHQQATFAGFIKGATWVSILSIAVLVFLALAN) traverse the membrane as a helical segment. Position 50 (Ser50) is a topological domain, periplasmic.

The protein localises to the cell inner membrane. It carries out the reaction 4 Fe(II)-[cytochrome c] + O2 + 8 H(+)(in) = 4 Fe(III)-[cytochrome c] + 2 H2O + 4 H(+)(out). Functionally, not required for enzymatic activity or proton pumping of the cytochrome c oxidase complex. In Paracoccus denitrificans, this protein is Cytochrome c oxidase subunit 4 (ctaH).